Reading from the N-terminus, the 813-residue chain is Lon protease (813 aa).

Residues 14-207 (LPLLPLRGII…ILTEILAREM (194 aa)) form the Lon N-terminal domain. 359 to 366 (GPPGVGKT) lines the ATP pocket. In terms of domain architecture, Lon proteolytic spans 595-776 (ESQVGVATGL…DQVIREALLE (182 aa)). Active-site residues include serine 682 and lysine 725.

It belongs to the peptidase S16 family. In terms of assembly, homohexamer. Organized in a ring with a central cavity.

Its subcellular location is the cytoplasm. The enzyme catalyses Hydrolysis of proteins in presence of ATP.. Its function is as follows. ATP-dependent serine protease that mediates the selective degradation of mutant and abnormal proteins as well as certain short-lived regulatory proteins. Required for cellular homeostasis and for survival from DNA damage and developmental changes induced by stress. Degrades polypeptides processively to yield small peptide fragments that are 5 to 10 amino acids long. Binds to DNA in a double-stranded, site-specific manner. This Heliobacterium modesticaldum (strain ATCC 51547 / Ice1) protein is Lon protease.